The primary structure comprises 249 residues: Large ribosomal subunit protein uL1 (249 aa).

Belongs to the universal ribosomal protein uL1 family. As to quaternary structure, part of the 50S ribosomal subunit.

Functionally, binds directly to 23S rRNA. The L1 stalk is quite mobile in the ribosome, and is involved in E site tRNA release. Its function is as follows. Protein L1 is also a translational repressor protein, it controls the translation of the L11 operon by binding to its mRNA. This is Large ribosomal subunit protein uL1 from Orientia tsutsugamushi (strain Ikeda) (Rickettsia tsutsugamushi).